The sequence spans 363 residues: MDNYTYSELLKSLQNKCDNIALIIKPEKIKQELERIEKEQEDPNFWQDVLKARDTNKEKVRLNRLLETYQKTKNSLDESVELFELAQNDNDEVTLSLLYEEAPILENSVQKVEIEIMLSGENDASNAIITIQPGAGGTESQDWASILYRMYLRWAERRGFKSEILDYQDGEEAGIKGVAFIIKGENAYGYLKNENGVHRLVRISPFDANAKRHTSFASVQISPELDDDIDIEIDEKDVRYDYYRSSGAGGQHVNKTESAVRITHFPTGIVVQCQNDRSQHKNKASALKMLKSKLYELELEKQQSSAKNEEKSEIGWGHQIRSYVLAPYQQVKDARSNTAYSNVEAILDGDIDAILEGVLIAKA.

Residue Gln-251 is modified to N5-methylglutamine.

The protein belongs to the prokaryotic/mitochondrial release factor family. In terms of processing, methylated by PrmC. Methylation increases the termination efficiency of RF2.

It localises to the cytoplasm. In terms of biological role, peptide chain release factor 2 directs the termination of translation in response to the peptide chain termination codons UGA and UAA. In Helicobacter pylori (strain ATCC 700392 / 26695) (Campylobacter pylori), this protein is Peptide chain release factor 2 (prfB).